We begin with the raw amino-acid sequence, 536 residues long: Aminopeptidase (536 aa).

The N-terminal stretch at Met1–Ala24 is a signal peptide. The 104-residue stretch at Ala152–Ser255 folds into the PA domain. At Thr196 the chain carries Phosphothreonine. 2 residues coordinate Zn(2+): His296 and Asp308. Residue Glu340 is the Proton acceptor of the active site. Zn(2+)-binding residues include Glu341, Asp369, and His467. An intrachain disulfide couples Cys465 to Cys470.

This sequence belongs to the peptidase M28 family. M28A subfamily. It depends on Zn(2+) as a cofactor.

It localises to the secreted. The enzyme catalyses Release of an N-terminal amino acid, Xaa-|-Yaa-, in which Xaa is preferably Leu, but may be other amino acids including Pro although not Arg or Lys, and Yaa may be Pro. Amino acid amides and methyl esters are also readily hydrolyzed, but rates on arylamides are exceedingly low.. Its function is as follows. A secreted aminopeptidase. Acts on free N-terminal amino groups with a very strong preference for Leu in the first position. The polypeptide is Aminopeptidase (Pseudomonas aeruginosa (strain UCBPP-PA14)).